A 248-amino-acid chain; its full sequence is Triosephosphate isomerase A (248 aa).

Substrate contacts are provided by asparagine 11 and lysine 13. The Electrophile role is filled by histidine 95. Catalysis depends on glutamate 165, which acts as the Proton acceptor.

Belongs to the triosephosphate isomerase family. Homodimer.

Its subcellular location is the cytoplasm. It carries out the reaction dihydroxyacetone phosphate = methylglyoxal + phosphate. It catalyses the reaction D-glyceraldehyde 3-phosphate = dihydroxyacetone phosphate. It participates in carbohydrate degradation; glycolysis; D-glyceraldehyde 3-phosphate from glycerone phosphate: step 1/1. Its pathway is carbohydrate biosynthesis; gluconeogenesis. Functionally, triosephosphate isomerase is an extremely efficient metabolic enzyme that catalyzes the interconversion between dihydroxyacetone phosphate (DHAP) and D-glyceraldehyde-3-phosphate (G3P) in glycolysis and gluconeogenesis. It is also responsible for the non-negligible production of methylglyoxal a reactive cytotoxic side-product that modifies and can alter proteins, DNA and lipids. In Danio rerio (Zebrafish), this protein is Triosephosphate isomerase A (tpi1a).